The sequence spans 86 residues: Large ribosomal subunit protein bL31B (86 aa).

It belongs to the bacterial ribosomal protein bL31 family. Type B subfamily. As to quaternary structure, part of the 50S ribosomal subunit.

In Vibrio parahaemolyticus serotype O3:K6 (strain RIMD 2210633), this protein is Large ribosomal subunit protein bL31B.